Here is a 391-residue protein sequence, read N- to C-terminus: GTPase HflX (391 aa).

Positions 162–181 (LAQQRGGAKGTRGASRGAGE) are disordered. Residues 222-391 (KIGAIVGYTN…KITDIIIFDK (170 aa)) form the Hflx-type G domain. Residues 228–235 (GYTNAGKS), 253–257 (FATLD), 278–281 (DTVG), 344–347 (NKMD), and 369–371 (SVT) each bind GTP. 2 residues coordinate Mg(2+): Ser-235 and Thr-255.

The protein belongs to the TRAFAC class OBG-HflX-like GTPase superfamily. HflX GTPase family. Monomer. Associates with the 50S ribosomal subunit. It depends on Mg(2+) as a cofactor.

It is found in the cytoplasm. Its function is as follows. GTPase that associates with the 50S ribosomal subunit and may have a role during protein synthesis or ribosome biogenesis. This chain is GTPase HflX, found in Treponema denticola (strain ATCC 35405 / DSM 14222 / CIP 103919 / JCM 8153 / KCTC 15104).